The primary structure comprises 148 residues: Sperm-specific protein PHI-2B (148 aa).

Residues 1–35 are compositionally biased toward basic residues; that stretch reads PSPSRRSRSRSRSRSKSPKRSPAKKARKTPKKRRA. 2 disordered regions span residues 1 to 44 and 97 to 148; these read PSPS…KPST and GVLV…KSNN. Positions 40 to 119 constitute an H15 domain; that stretch reads KKPSTLSMIV…GATGSFRVGK (80 aa). A compositionally biased stretch (basic residues) spans 124–148; the sequence is PKKKAKKAKSPKKKSSKKSSNKSNN.

Belongs to the histone H1/H5 family. Sperm.

It localises to the nucleus. The protein localises to the chromosome. Functionally, linker histones are implicated in chromatin remodeling and/or transcriptional regulation during spermiogenesis, the process of spermatid maturation into spermatozoa. The protein is Sperm-specific protein PHI-2B of Mytilus californianus (California mussel).